A 272-amino-acid chain; its full sequence is MSRAPDRIAACFDALRHSGRKALIPFITAGDPSLEATVPVMHALVRAGANIIELGVPFSDPMADGPTIQRSSERALGRGAGLAYVIEAVQEFRREDATTPVVLMGYLNPIEIHGTRRFAETAVAAGIDGVLLVDLPPEEADETRAIFTEVGLALIALASPTTGEARLDMLCSTAQGYLYYVSFSGVTGAADRLDTHAASDRLRQLRARAGAPVVAGFGIKDAASAAAMAVDADGVVVGSALVAALADASDVRSARKRAEDFLQPLRQALDAG.

Active-site proton acceptor residues include Glu53 and Asp64.

The protein belongs to the TrpA family. In terms of assembly, tetramer of two alpha and two beta chains.

The catalysed reaction is (1S,2R)-1-C-(indol-3-yl)glycerol 3-phosphate + L-serine = D-glyceraldehyde 3-phosphate + L-tryptophan + H2O. It functions in the pathway amino-acid biosynthesis; L-tryptophan biosynthesis; L-tryptophan from chorismate: step 5/5. Functionally, the alpha subunit is responsible for the aldol cleavage of indoleglycerol phosphate to indole and glyceraldehyde 3-phosphate. The chain is Tryptophan synthase alpha chain from Xanthomonas campestris pv. campestris (strain 8004).